Consider the following 201-residue polypeptide: Single-stranded DNA-binding protein, mitochondrial (201 aa).

An SSB domain is found at 71–184; the sequence is VHRAIICGKV…RDGKIRMIKY (114 aa).

It localises to the mitochondrion. In terms of biological role, binds to ss-DNA. This Arabidopsis thaliana (Mouse-ear cress) protein is Single-stranded DNA-binding protein, mitochondrial.